Here is a 483-residue protein sequence, read N- to C-terminus: Dual specificity protein phosphatase 10 (483 aa).

A Rhodanese domain is found at 169–286 (PSQGPVIIDC…FKQNHGNLCD (118 aa)). The interval 200-216 (KISRRRLQQGKITVLDL) is interaction with MAP kinases. Residues 322 to 465 (ELTPILPFLF…LLEFEEDLNN (144 aa)) enclose the Tyrosine-protein phosphatase domain. Cys-409 serves as the catalytic Phosphocysteine intermediate.

The protein belongs to the protein-tyrosine phosphatase family. Non-receptor class dual specificity subfamily. In terms of assembly, monomer. Interacts with MAPK14.

It is found in the cytoplasm. The protein resides in the nucleus. It catalyses the reaction O-phospho-L-tyrosyl-[protein] + H2O = L-tyrosyl-[protein] + phosphate. It carries out the reaction O-phospho-L-seryl-[protein] + H2O = L-seryl-[protein] + phosphate. The catalysed reaction is O-phospho-L-threonyl-[protein] + H2O = L-threonyl-[protein] + phosphate. Protein phosphatase involved in the inactivation of MAP kinases. Has a specificity for the MAPK11/MAPK12/MAPK13/MAPK14 subfamily. It preferably dephosphorylates p38. The chain is Dual specificity protein phosphatase 10 (Dusp10) from Mus musculus (Mouse).